The primary structure comprises 119 residues: MLSNIIPLSIGAALGATARWLLNLAVPAAMSPATGNLFANWTGALLIGIFAETVNHPQWKLLLITGFLGSLTTLSGFSLETVTLLQSNRPASALSNIFLHTAGSLLLTWLGLKIGTAVK.

Transmembrane regions (helical) follow at residues 37 to 54, 61 to 83, and 93 to 112; these read LFAN…AETV, LLLI…ETVT, and ALSN…WLGL. 2 residues coordinate Na(+): G69 and T72.

This sequence belongs to the fluoride channel Fluc/FEX (TC 1.A.43) family.

The protein localises to the cell inner membrane. It catalyses the reaction fluoride(in) = fluoride(out). Its activity is regulated as follows. Na(+) is not transported, but it plays an essential structural role and its presence is essential for fluoride channel function. Functionally, fluoride-specific ion channel. Important for reducing fluoride concentration in the cell, thus reducing its toxicity. This chain is Fluoride-specific ion channel FluC, found in Neisseria meningitidis serogroup C (strain 053442).